Here is a 379-residue protein sequence, read N- to C-terminus: Cytochrome b (379 aa).

4 consecutive transmembrane segments (helical) span residues 33-53 (FGSL…FLAM), 77-98 (WLIR…FIHV), 113-133 (WNIG…GYVL), and 178-198 (FFAF…VHLL). Residues histidine 83 and histidine 97 each coordinate heme b. The heme b site is built by histidine 182 and histidine 196. Histidine 201 serves as a coordination point for a ubiquinone. 4 consecutive transmembrane segments (helical) span residues 226–246 (IKDL…ALFF), 288–308 (LGGV…PLLN), 320–340 (ITQT…WIGG), and 347–367 (FTTI…ILMP).

Belongs to the cytochrome b family. The cytochrome bc1 complex contains 11 subunits: 3 respiratory subunits (MT-CYB, CYC1 and UQCRFS1), 2 core proteins (UQCRC1 and UQCRC2) and 6 low-molecular weight proteins (UQCRH/QCR6, UQCRB/QCR7, UQCRQ/QCR8, UQCR10/QCR9, UQCR11/QCR10 and a cleavage product of UQCRFS1). This cytochrome bc1 complex then forms a dimer. Requires heme b as cofactor.

It is found in the mitochondrion inner membrane. Its function is as follows. Component of the ubiquinol-cytochrome c reductase complex (complex III or cytochrome b-c1 complex) that is part of the mitochondrial respiratory chain. The b-c1 complex mediates electron transfer from ubiquinol to cytochrome c. Contributes to the generation of a proton gradient across the mitochondrial membrane that is then used for ATP synthesis. The chain is Cytochrome b (MT-CYB) from Akodon aerosus (Highland grass mouse).